A 67-amino-acid chain; its full sequence is Alpha-toxin Cn12 (67 aa).

The 66-residue stretch at 1–66 (RDGYPLASNG…WGDSGTGPCR (66 aa)) folds into the LCN-type CS-alpha/beta domain. Disulfide bonds link Cys11/Cys65, Cys15/Cys40, Cys25/Cys45, and Cys29/Cys47.

In terms of tissue distribution, expressed by the venom gland.

It is found in the secreted. Its function is as follows. Alpha toxins bind voltage-independently at site-3 of sodium channels (Nav) and inhibit the inactivation of the activated channels, thereby blocking neuronal transmission. This toxin binds, in vitro, to sodium channels and inhibits the inactivation of the activated channels. Seems not toxic to mice, crickets and sweet-water shrimps. This chain is Alpha-toxin Cn12, found in Centruroides noxius (Mexican scorpion).